A 251-amino-acid chain; its full sequence is Hydroxyacylglutathione hydrolase (251 aa).

Residues histidine 53, histidine 55, aspartate 57, histidine 58, histidine 110, aspartate 127, and histidine 165 each contribute to the Zn(2+) site.

Belongs to the metallo-beta-lactamase superfamily. Glyoxalase II family. In terms of assembly, monomer. The cofactor is Zn(2+).

The enzyme catalyses an S-(2-hydroxyacyl)glutathione + H2O = a 2-hydroxy carboxylate + glutathione + H(+). Its pathway is secondary metabolite metabolism; methylglyoxal degradation; (R)-lactate from methylglyoxal: step 2/2. Its function is as follows. Thiolesterase that catalyzes the hydrolysis of S-D-lactoyl-glutathione to form glutathione and D-lactic acid. The chain is Hydroxyacylglutathione hydrolase from Escherichia coli O6:K15:H31 (strain 536 / UPEC).